Reading from the N-terminus, the 761-residue chain is Subtilisin-like protease SBT3.15 (761 aa).

The first 21 residues, 1–21 (MENSFLSSKLVFLLAIALVLF), serve as a signal peptide directing secretion. Positions 22 to 120 (LNTELSFLTA…VIPNRILKLK (99 aa)) are cleaved as a propeptide — activation peptide. Residues 41–119 (VYIVYLGQRE…HVIPNRILKL (79 aa)) enclose the Inhibitor I9 domain. Residues 134-613 (PTSFSSSSSA…GGLVNPEKAA (480 aa)) form the Peptidase S8 domain. An N-linked (GlcNAc...) asparagine glycan is attached at N151. D164 functions as the Charge relay system in the catalytic mechanism. Residue N197 is glycosylated (N-linked (GlcNAc...) asparagine). The Charge relay system role is filled by H241. 2 N-linked (GlcNAc...) asparagine glycosylation sites follow: N256 and N384. S544 acts as the Charge relay system in catalysis. N636 carries N-linked (GlcNAc...) asparagine glycosylation.

The protein belongs to the peptidase S8 family.

It is found in the secreted. The polypeptide is Subtilisin-like protease SBT3.15 (Arabidopsis thaliana (Mouse-ear cress)).